The chain runs to 82 residues: ATP synthase subunit c, chloroplastic (82 aa).

The next 2 helical transmembrane spans lie at 4-24 (IISAASVIAAGLAIGLAAIGP) and 57-77 (LAFMEALTIYGLVVALALLFA).

Belongs to the ATPase C chain family. F-type ATPases have 2 components, F(1) - the catalytic core - and F(0) - the membrane proton channel. F(1) has five subunits: alpha(3), beta(3), gamma(1), delta(1), epsilon(1). F(0) has four main subunits: a(1), b(1), b'(1) and c(10-14). The alpha and beta chains form an alternating ring which encloses part of the gamma chain. F(1) is attached to F(0) by a central stalk formed by the gamma and epsilon chains, while a peripheral stalk is formed by the delta, b and b' chains.

It localises to the plastid. Its subcellular location is the chloroplast thylakoid membrane. Functionally, f(1)F(0) ATP synthase produces ATP from ADP in the presence of a proton or sodium gradient. F-type ATPases consist of two structural domains, F(1) containing the extramembraneous catalytic core and F(0) containing the membrane proton channel, linked together by a central stalk and a peripheral stalk. During catalysis, ATP synthesis in the catalytic domain of F(1) is coupled via a rotary mechanism of the central stalk subunits to proton translocation. In terms of biological role, key component of the F(0) channel; it plays a direct role in translocation across the membrane. A homomeric c-ring of between 10-14 subunits forms the central stalk rotor element with the F(1) delta and epsilon subunits. The protein is ATP synthase subunit c, chloroplastic of Trieres chinensis (Marine centric diatom).